A 478-amino-acid polypeptide reads, in one-letter code: RNA exonuclease 3 (478 aa).

The Exonuclease domain maps to 320–465; sequence VLALDCEMAF…EDAIAAMDVI (146 aa).

Belongs to the REXO1/REXO3 family.

It is found in the cytoplasm. The protein localises to the nucleus. Its function is as follows. 3' to 5' exoribonuclease required for proper 3' end maturation of MRP RNA and of the U5L snRNA. The polypeptide is RNA exonuclease 3 (REX3) (Kluyveromyces lactis (strain ATCC 8585 / CBS 2359 / DSM 70799 / NBRC 1267 / NRRL Y-1140 / WM37) (Yeast)).